An 843-amino-acid polypeptide reads, in one-letter code: RNA-binding protein 25 (843 aa).

The tract at residues 1–30 (MSFPPHLNRPPMGIPALPPGIPPPQFPGFP) is disordered. A compositionally biased stretch (pro residues) spans 12-30 (MGIPALPPGIPPPQFPGFP). Positions 87–164 (TTVFVGNISE…KKLLVKVDAK (78 aa)) constitute an RRM domain. Position 135 is an N6-acetyllysine (lysine 135). Disordered stretches follow at residues 171 to 202 (EWKA…ETKR) and 219 to 243 (SSEL…KKED). Phosphoserine is present on residues serine 226 and serine 229. Glycyl lysine isopeptide (Lys-Gly) (interchain with G-Cter in SUMO2) cross-links involve residues lysine 261, lysine 273, and lysine 430. Basic and acidic residues-rich tracts occupy residues 280-433 (EISK…KRDR) and 521-573 (RLRD…ERRR). 2 disordered regions span residues 280 to 442 (EISK…DAYE) and 498 to 688 (EFLE…KRKK). A necessary for nuclear speckle localization region spans residues 285-644 (RDTHKKLEEE…PNTPGDESPC (360 aa)). Lysine 578 is covalently cross-linked (Glycyl lysine isopeptide (Lys-Gly) (interchain with G-Cter in SUMO2)). Serine 583 bears the Phosphoserine mark. Residues 590-599 (KQEKEEKREE) show a composition bias toward basic and acidic residues. The segment covering 621–630 (SSAPSVSSAS) has biased composition (low complexity). Lysine 671 participates in a covalent cross-link: Glycyl lysine isopeptide (Lys-Gly) (interchain with G-Cter in SUMO2). The span at 674 to 683 (ASNSPGQPNS) shows a compositional bias: polar residues. Phosphoserine is present on residues serine 677 and serine 683. Glycyl lysine isopeptide (Lys-Gly) (interchain with G-Cter in SUMO2) cross-links involve residues lysine 688 and lysine 697. Position 703 is a phosphoserine (serine 703). Lysine 722 is covalently cross-linked (Glycyl lysine isopeptide (Lys-Gly) (interchain with G-Cter in SUMO2)). One can recognise a PWI domain in the interval 750–843 (PELFAYPLDW…TEAKKIGLVK (94 aa)).

As to quaternary structure, interacts with LUC7L3 and SRRM1. Specifically associates with functional splicing complexes, including Sm proteins and U1, U2, U4, U5 and U6 snRNAs. Associates with exon junction complex (EJC) proteins, including APEX1, DDX39B, NCBP1, RBM8A and RNPS1. Interaction with NCBP1 is RNA-dependent. In terms of processing, sumoylated.

The protein resides in the nucleus speckle. The protein localises to the cytoplasm. Functionally, RNA-binding protein that acts as a regulator of alternative pre-mRNA splicing. Involved in apoptotic cell death through the regulation of the apoptotic factor BCL2L1 isoform expression. Modulates the ratio of proapoptotic BCL2L1 isoform S to antiapoptotic BCL2L1 isoform L mRNA expression. When overexpressed, stimulates proapoptotic BCL2L1 isoform S 5'-splice site (5'-ss) selection, whereas its depletion caused the accumulation of antiapoptotic BCL2L1 isoform L. Promotes BCL2L1 isoform S 5'-ss usage through the 5'-CGGGCA-3' RNA sequence. Its association with LUC7L3 promotes U1 snRNP binding to a weak 5' ss in a 5'-CGGGCA-3'-dependent manner. Binds to the exonic splicing enhancer 5'-CGGGCA-3' RNA sequence located within exon 2 of the BCL2L1 pre-mRNA. Also involved in the generation of an abnormal and truncated splice form of SCN5A in heart failure. The chain is RNA-binding protein 25 (RBM25) from Homo sapiens (Human).